A 425-amino-acid chain; its full sequence is L-cysteine:1D-myo-inositol 2-amino-2-deoxy-alpha-D-glucopyranoside ligase (425 aa).

Cys-43 serves as a coordination point for Zn(2+). Residues Cys-43–Thr-46, Ser-58, and Asn-81–Thr-83 contribute to the L-cysteinyl-5'-AMP site. Positions Ile-45–His-55 match the 'HIGH' region motif. The 'ERGGDP' region signature appears at Glu-199–Pro-204. Trp-240 is an L-cysteinyl-5'-AMP binding site. Cys-244 contacts Zn(2+). Gly-262–Asp-264 contacts L-cysteinyl-5'-AMP. His-269 contributes to the Zn(2+) binding site. Val-295 provides a ligand contact to L-cysteinyl-5'-AMP. Residues Lys-301–Ser-305 carry the 'KMSKS' region motif.

Belongs to the class-I aminoacyl-tRNA synthetase family. MshC subfamily. Monomer. The cofactor is Zn(2+).

The catalysed reaction is 1D-myo-inositol 2-amino-2-deoxy-alpha-D-glucopyranoside + L-cysteine + ATP = 1D-myo-inositol 2-(L-cysteinylamino)-2-deoxy-alpha-D-glucopyranoside + AMP + diphosphate + H(+). In terms of biological role, catalyzes the ATP-dependent condensation of GlcN-Ins and L-cysteine to form L-Cys-GlcN-Ins. In Paenarthrobacter aurescens (strain TC1), this protein is L-cysteine:1D-myo-inositol 2-amino-2-deoxy-alpha-D-glucopyranoside ligase.